The primary structure comprises 334 residues: Mediator of RNA polymerase II transcription subunit 4 (334 aa).

A coiled-coil region spans residues 71 to 100; that stretch reads QEREQLIRTLEAHVEKRDEVIQQLETNLKS. Positions 193 to 334 are disordered; sequence PLITSPSASS…ASKKTGSSNK (142 aa). Polar residues-rich tracts occupy residues 194–206 and 251–282; these read LITS…SNGG and NEKQ…SSPN.

It belongs to the Mediator complex subunit 4 family. Component of the Mediator complex.

The protein localises to the nucleus. Its function is as follows. Component of the Mediator complex, a coactivator involved in the regulated transcription of nearly all RNA polymerase II-dependent genes. Mediator functions as a bridge to convey information from gene-specific regulatory proteins to the basal RNA polymerase II transcription machinery. Mediator is recruited to promoters by direct interactions with regulatory proteins and serves as a scaffold for the assembly of a functional preinitiation complex with RNA polymerase II and the general transcription factors. The sequence is that of Mediator of RNA polymerase II transcription subunit 4 (mdt-4) from Caenorhabditis elegans.